Here is a 3414-residue protein sequence, read N- to C-terminus: Genome polyprotein (3414 aa).

The tract at residues 1-27 is disordered; that stretch reads MAGKAVLKGKGGGPPRRASKVAPKKTR. Over 1 to 98 the chain is Cytoplasmic; that stretch reads MAGKAVLKGK…LHRRGSRRTT (98 aa). Residues 17-27 show a composition bias toward basic residues; sequence RASKVAPKKTR. Positions 97 to 117 are cleaved as a propeptide — ER anchor for the capsid protein C, removed in mature form by serine protease NS3; that stretch reads TTIDWMTPLLITVMLGMCLTA. The helical transmembrane segment at 99–117 threads the bilayer; sequence IDWMTPLLITVMLGMCLTA. Residues 118–242 lie on the Extracellular side of the membrane; the sequence is TVRRERDGSM…HLTRVEGWVW (125 aa). A glycan (N-linked (GlcNAc...) asparagine; by host) is linked at asparagine 144. A helical membrane pass occupies residues 243–260; sequence KNKLFTLSLVMVAWLMVD. A topological domain (cytoplasmic) is located at residue glycine 261. Residues 262–280 traverse the membrane as a helical segment; the sequence is LLPRILIVVVALALVPAYA. Residues 281–727 lie on the Extracellular side of the membrane; the sequence is SRCTHLENRD…HTVLGGAFNT (447 aa). Disulfide bonds link cysteine 283–cysteine 310, cysteine 340–cysteine 396, cysteine 340–cysteine 401, cysteine 354–cysteine 385, cysteine 372–cysteine 396, and cysteine 372–cysteine 401. Residues 378–391 are fusion peptide; it reads DRGWGNHCGLFGKG. Asparagine 434 is a glycosylation site (N-linked (GlcNAc...) asparagine; by host). 2 disulfide bridges follow: cysteine 466–cysteine 570 and cysteine 587–cysteine 618. A helical membrane pass occupies residues 728-748; sequence LLGGVGFLPKILLGVAMAWLG. Topologically, residues 749-755 are cytoplasmic; sequence LNMRNPT. Residues 756–776 traverse the membrane as a helical segment; sequence LSMGFLLSGGLVLAMTLGVGA. Topologically, residues 777 to 1187 are extracellular; the sequence is DVGCAVDTER…LVSVESLFRY (411 aa). Cystine bridges form between cysteine 780–cysteine 791, cysteine 831–cysteine 920, cysteine 955–cysteine 1000, cysteine 1057–cysteine 1106, cysteine 1068–cysteine 1090, and cysteine 1089–cysteine 1093. 3 N-linked (GlcNAc...) asparagine; by host glycosylation sites follow: asparagine 861, asparagine 983, and asparagine 999. A helical membrane pass occupies residues 1188 to 1208; that stretch reads LVAVGLVFQLELGPEAVAMVL. Topologically, residues 1209 to 1232 are cytoplasmic; it reads LQAVFEMRTCLLSGFVLRRSITTR. The helical transmembrane segment at 1233–1253 threads the bilayer; it reads EIVTVYFLLLVLEMGIPVKGL. The Lumenal segment spans residues 1254-1267; it reads EHLWRWTDALAMGA. A helical transmembrane segment spans residues 1268–1288; that stretch reads IIFRACTAEGKTGIGLLLAAF. The Cytoplasmic segment spans residues 1289–1300; that stretch reads MTQSDMNIIHDG. A helical transmembrane segment spans residues 1301–1319; the sequence is LTAFLCVATTMAIWRYIRG. Topologically, residues 1320–1325 are lumenal; it reads QGERKG. A helical transmembrane segment spans residues 1326-1346; sequence LTWIVPLAGILGGEGSGVRLL. Over 1347-1359 the chain is Cytoplasmic; that stretch reads AFWELAASRGRRS. A helical transmembrane segment spans residues 1360–1378; the sequence is FNEPMTVIGVMLTLASGMM. The Lumenal portion of the chain corresponds to 1379 to 1382; it reads RHTS. A helical transmembrane segment spans residues 1383–1403; it reads QEAVCAMALAAFLLLMLTLGT. The Cytoplasmic segment spans residues 1404–1454; sequence RKMQLLAEWSGNIEWNPELTSEGGEVSLRVRQDALGNLHLTELEKEERMMA. An interacts with and activates NS3 protease region spans residues 1410-1449; sequence AEWSGNIEWNPELTSEGGEVSLRVRQDALGNLHLTELEKE. The segment at residues 1455-1475 is an intramembrane region (helical); the sequence is FWLVVGLIASAFHWSGILIVM. The Cytoplasmic segment spans residues 1476-2160; that stretch reads GLWTISEMLG…RIGERDAPEA (685 aa). The Peptidase S7 domain occupies 1490–1669; sequence TDLVFSGCSE…EVEKSRPNLP (180 aa). Active-site charge relay system; for serine protease NS3 activity residues include histidine 1543, aspartate 1567, and serine 1627. In terms of domain architecture, Helicase ATP-binding spans 1675–1831; it reads TGWTAKGQIT…ESNGAIASEE (157 aa). ATP is bound at residue 1688 to 1695; that stretch reads MHPGSGKT. The DEAH box signature appears at 1779–1782; sequence DEAH. The 160-residue stretch at 1841 to 2000 folds into the Helicase C-terminal domain; that stretch reads DGFDWITEYE…TARGPVATFY (160 aa). Lysine 1883 is modified (N6-acetyllysine; by host). A helical transmembrane segment spans residues 2161–2181; it reads FLTAVEMLVLGLATLGVVWCF. At 2182–2189 the chain is on the lumenal side; sequence VVRTSVSR. Positions 2190–2209 form an intramembrane region, helical; the sequence is MVLGTLVLATSLIFLWAGGV. Position 2210 (glycine 2210) is a topological domain, lumenal. The helical transmembrane segment at 2211–2231 threads the bilayer; the sequence is YGNMAGVALVFYTLLTVLQPE. Residues 2232 to 2238 are Cytoplasmic-facing; sequence TGKQRSS. The chain crosses the membrane as a helical span at residues 2239–2259; it reads DDNKLAYFLLTLCGLAGMVAA. At 2260-2296 the chain is on the lumenal side; sequence NEMGLLEKTKADLAALFARDQGETVRWGEWTNLDIQP. The helical intramembrane region spans 2297–2315; it reads ARSWGTYVLVVSLFTPYML. Over 2316–2343 the chain is Lumenal; the sequence is HQLQTRIQQLVNSAVASGAQAMRDLGGG. The segment at residues 2344–2364 is an intramembrane region (helical); that stretch reads TPFFGVAGHVLALGVASLVGA. The Lumenal portion of the chain corresponds to 2365-2368; it reads TPTS. A helical transmembrane segment spans residues 2369 to 2389; sequence LILGVGLAAFHLAIVVSGLEA. Residues 2390-2432 are Cytoplasmic-facing; the sequence is ELTQRAHKVFFSAMVRNPMVDGDVINPFGDGEAKPALYERKLS. The chain crosses the membrane as a helical span at residues 2433 to 2453; sequence LILALVLCLASVVMNRTFVAV. The Lumenal portion of the chain corresponds to 2454-2477; the sequence is TEAGAVGVAAAMQLLRPEMDVLWT. Residues 2478-2498 traverse the membrane as a helical segment; the sequence is MPVACGMSGVVRGSLWGLLPL. At 2499-3414 the chain is on the cytoplasmic side; it reads GHRLWLRTTG…WELKLESSIF (916 aa). In terms of domain architecture, mRNA cap 0-1 NS5-type MT spans 2512 to 2776; the sequence is GGSEGDTLGD…EIDLGVGTRS (265 aa). Serine 2567 contacts S-adenosyl-L-methionine. A Phosphoserine modification is found at serine 2567. The active-site For 2'-O-MTase activity is the lysine 2572. Positions 2597, 2598, 2615, 2616, 2642, and 2643 each coordinate S-adenosyl-L-methionine. The active-site For 2'-O-MTase activity is aspartate 2657. Position 2658 (isoleucine 2658) interacts with S-adenosyl-L-methionine. Catalysis depends on for 2'-O-MTase activity residues lysine 2694 and glutamate 2730. The interval 2730-2734 is interaction with host SCRIB; it reads EMYFS. Residue tyrosine 2732 participates in S-adenosyl-L-methionine binding. Residues glutamate 2950, histidine 2954, cysteine 2959, and cysteine 2962 each contribute to the Zn(2+) site. Residues 3040 to 3189 enclose the RdRp catalytic domain; sequence GLFYADDTAG…RPVDDRFSKA (150 aa). Residues histidine 3224, cysteine 3240, and cysteine 3359 each contribute to the Zn(2+) site.

In the N-terminal section; belongs to the class I-like SAM-binding methyltransferase superfamily. mRNA cap 0-1 NS5-type methyltransferase family. As to quaternary structure, homodimer. Interacts (via N-terminus) with host EXOC1 (via C-terminus); this interaction results in EXOC1 degradation through the proteasome degradation pathway. Forms heterodimers with envelope protein E in the endoplasmic reticulum and Golgi. In terms of assembly, homodimer; in the endoplasmic reticulum and Golgi. Interacts with protein prM. Interacts with non-structural protein 1. As to quaternary structure, homodimer; Homohexamer when secreted. Interacts with envelope protein E. Interacts (via N-terminus) with serine protease NS3. In terms of assembly, forms a heterodimer with serine protease NS3. May form homooligomers. As to quaternary structure, forms a heterodimer with NS2B. Interacts with non-structural protein 2A (via N-terminus). Interacts with NS4B. Interacts with unphosphorylated RNA-directed RNA polymerase NS5; this interaction stimulates RNA-directed RNA polymerase NS5 guanylyltransferase activity. Interacts with serine protease NS3. Interacts with NS1. In terms of assembly, homodimer. Interacts with host STAT2; this interaction inhibits the phosphorylation of the latter, and, when all viral proteins are present (polyprotein), targets STAT2 for degradation. Interacts with serine protease NS3. Interacts with host SCRIB; this interaction targets NS5 to the cell membrane periphery and nucleus, thereby allowing efficient host nuclear STAT1 inhibition. Post-translationally, specific enzymatic cleavages in vivo yield mature proteins. Cleavages in the lumen of endoplasmic reticulum are performed by host signal peptidase, whereas cleavages in the cytoplasmic side are performed by serine protease NS3. Signal cleavage at the 2K-4B site requires a prior NS3 protease-mediated cleavage at the 4A-2K site. In terms of processing, cleaved in post-Golgi vesicles by a host furin, releasing the mature small envelope protein M, and peptide pr. This cleavage is incomplete as up to 30% of viral particles still carry uncleaved prM. N-glycosylated. Post-translationally, N-glycosylated. The excreted form is glycosylated and this is required for efficient secretion of the protein from infected cells. In terms of processing, acetylated by host KAT5. Acetylation modulates NS3 RNA-binding and unwinding activities and plays an important positive role for viral replication. Phosphorylated on serines residues. This phosphorylation may trigger NS5 nuclear localization.

The protein resides in the virion. Its subcellular location is the host nucleus. The protein localises to the host cytoplasm. It is found in the host perinuclear region. It localises to the secreted. The protein resides in the virion membrane. Its subcellular location is the host endoplasmic reticulum membrane. The catalysed reaction is Selective hydrolysis of -Xaa-Xaa-|-Yaa- bonds in which each of the Xaa can be either Arg or Lys and Yaa can be either Ser or Ala.. It catalyses the reaction RNA(n) + a ribonucleoside 5'-triphosphate = RNA(n+1) + diphosphate. It carries out the reaction a ribonucleoside 5'-triphosphate + H2O = a ribonucleoside 5'-diphosphate + phosphate + H(+). The enzyme catalyses ATP + H2O = ADP + phosphate + H(+). The catalysed reaction is a 5'-end (5'-triphosphoguanosine)-ribonucleoside in mRNA + S-adenosyl-L-methionine = a 5'-end (N(7)-methyl 5'-triphosphoguanosine)-ribonucleoside in mRNA + S-adenosyl-L-homocysteine. It catalyses the reaction a 5'-end (N(7)-methyl 5'-triphosphoguanosine)-ribonucleoside in mRNA + S-adenosyl-L-methionine = a 5'-end (N(7)-methyl 5'-triphosphoguanosine)-(2'-O-methyl-ribonucleoside) in mRNA + S-adenosyl-L-homocysteine + H(+). Its function is as follows. Plays a role in virus budding by binding to membrane and gathering the viral RNA into a nucleocapsid that forms the core of a mature virus particle. During virus entry, may induce genome penetration in host cytoplasm after hemifusion induced by surface proteins. Can migrate to the cell nucleus where it modulates host functions. In terms of biological role, inhibits RNA silencing by interfering with host Dicer. Functionally, prevents premature fusion activity of envelope proteins in trans-Golgi by binding to envelope protein E at pH6.0. After virion release in extracellular space gets dissociated from E dimers. Acts as a chaperone for envelope protein E during intracellular virion assembly by masking and inactivating envelope protein E fusion peptide. prM is the only viral peptide matured by host furin in the trans-Golgi network. Presumably to avoid catastrophic activation of the viral fusion activity in acidic GolGi compartment prior to virion release. prM-E cleavage is ineficient, and many virions are only partially matured. These uncleaved prM would play a role in immune evasion. Its function is as follows. May play a role in virus budding. Exerts cytotoxic effects by activating a mitochondrial apoptotic pathway through M extodomain. May display a viroporin activity. In terms of biological role, binds to host cell surface receptor and mediates fusion between viral and cellular membranes. Envelope protein is synthesized in the endoplasmic reticulum in the form of heterodimer with protein prM. They play a role in virion budding in the ER, and the newly formed immature particle is covered with 60 spikes composed of heterodimer between precursor prM and envelope protein E. The virion is transported to the Golgi apparatus where the low pH causes dissociation of PrM-E heterodimers and formation of E homodimers. prM-E cleavage is ineficient, and many virions are only partially matured. These uncleaved prM would play a role in immune evasion. Functionally, involved in immune evasion, pathogenesis and viral replication. Once cleaved off the polyprotein, is targeted to three destinations: the viral replication cycle, the plasma membrane and the extracellular compartment. Essential for viral replication. Required for formation of the replication complex and recruitment of other non-structural proteins to the ER-derived membrane structures. Excreted as a hexameric lipoparticle that plays a role against host immune response. Antagonizing the complement function. Binds to the host macrophages and dendritic cells. Inhibits signal transduction originating from Toll-like receptor 3 (TLR3). Component of the viral RNA replication complex that functions in virion assembly and antagonizes the host immune response. Its function is as follows. Required cofactor for the serine protease function of NS3. May have membrane-destabilizing activity and form viroporins. In terms of biological role, displays three enzymatic activities: serine protease, NTPase and RNA helicase. NS3 serine protease, in association with NS2B, performs its autocleavage and cleaves the polyprotein at dibasic sites in the cytoplasm: C-prM, NS2A-NS2B, NS2B-NS3, NS3-NS4A, NS4A-2K and NS4B-NS5. NS3 RNA helicase binds RNA and unwinds dsRNA in the 3' to 5' direction. Functionally, regulates the ATPase activity of the NS3 helicase activity. NS4A allows NS3 helicase to conserve energy during unwinding. Functions as a signal peptide for NS4B and is required for the interferon antagonism activity of the latter. Its function is as follows. Induces the formation of ER-derived membrane vesicles where the viral replication takes place. Inhibits interferon (IFN)-induced host STAT1 phosphorylation and nuclear translocation, thereby preventing the establishment of cellular antiviral state by blocking the IFN-alpha/beta pathway. Inhibits STAT2 translocation in the nucleus after IFN-alpha treatment. In terms of biological role, replicates the viral (+) and (-) genome, and performs the capping of genomes in the cytoplasm. NS5 methylates viral RNA cap at guanine N-7 and ribose 2'-O positions. Besides its role in genome replication, also prevents the establishment of cellular antiviral state by blocking the interferon-alpha/beta (IFN-alpha/beta) signaling pathway. Inhibits host TYK2 and STAT2 phosphorylation, thereby preventing activation of JAK-STAT signaling pathway. This Homo sapiens (Human) protein is Genome polyprotein.